Consider the following 219-residue polypeptide: VQ motif-containing protein 19 (219 aa).

The short motif at 47 to 56 is the VQ element; that stretch reads FKQVVQMLTG. The disordered stretch occupies residues 52 to 94; the sequence is QMLTGSSSPRSPDSPRPPTTPSGKGNFVIPPIKTAQPKKHSGN. A phosphoserine mark is found at Ser59, Ser65, Ser127, Ser131, Ser139, Ser141, and Ser152. Thr155 carries the post-translational modification Phosphothreonine. Disordered stretches follow at residues 156–177 and 190–219; these read PLKQ…PLSE and HRSP…SPEM. A phosphoserine mark is found at Ser192 and Ser195. Thr196 and Thr211 each carry phosphothreonine. 2 positions are modified to phosphoserine: Ser212 and Ser216.

Phosphorylated on serine and threonine residues by MPK6.

It is found in the nucleus. Functionally, may modulate WRKY transcription factor activities. In Arabidopsis thaliana (Mouse-ear cress), this protein is VQ motif-containing protein 19.